The primary structure comprises 1165 residues: DNA-directed RNA polymerase subunit beta (1165 aa).

The protein belongs to the RNA polymerase beta chain family. The RNAP catalytic core consists of 2 alpha, 1 beta, 1 beta' and 1 omega subunit. When a sigma factor is associated with the core the holoenzyme is formed, which can initiate transcription.

It catalyses the reaction RNA(n) + a ribonucleoside 5'-triphosphate = RNA(n+1) + diphosphate. DNA-dependent RNA polymerase catalyzes the transcription of DNA into RNA using the four ribonucleoside triphosphates as substrates. The sequence is that of DNA-directed RNA polymerase subunit beta from Leifsonia xyli subsp. xyli (strain CTCB07).